Consider the following 325-residue polypeptide: mRNA decay factor CTH1 (325 aa).

2 C3H1-type zinc fingers span residues 204–232 and 242–270; these read LYKT…HGLN and NYRT…HGDD. The interval 284-306 is disordered; sequence SKDTALTPLPTSLAPSNNDNITN. The span at 292–306 shows a compositional bias: polar residues; the sequence is LPTSLAPSNNDNITN.

Its function is as follows. Binds to specific AU-rich elements (ARE) in the 3'-untranslated region of target mRNAs and promotes their degradation. In response to iron deficiency, promotes the decay of many mRNAs encoding proteins involved in iron-dependent pathways. Negatively regulates primarily iron-dependent mitochondrial processes including respiration and amino acid biosynthesis. The protein is mRNA decay factor CTH1 (CTH1) of Saccharomyces cerevisiae (strain ATCC 204508 / S288c) (Baker's yeast).